We begin with the raw amino-acid sequence, 247 residues long: ATP synthase subunit a, chloroplastic (247 aa).

Helical transmembrane passes span 38-58 (QVLITSWVVIAILLGSVIIAV), 95-115 (VPFIGTMFLFIFVSNWSGALL), 134-154 (INTTVALALPTSVAYFYAGLT), 199-219 (LVVVVLVSLVPSLVPIPVMFL), and 220-240 (GLFTSGIQALIFATLAAAYIG).

It belongs to the ATPase A chain family. In terms of assembly, F-type ATPases have 2 components, CF(1) - the catalytic core - and CF(0) - the membrane proton channel. CF(1) has five subunits: alpha(3), beta(3), gamma(1), delta(1), epsilon(1). CF(0) has four main subunits: a, b, b' and c.

Its subcellular location is the plastid. The protein resides in the chloroplast thylakoid membrane. Key component of the proton channel; it plays a direct role in the translocation of protons across the membrane. This is ATP synthase subunit a, chloroplastic from Dioscorea elephantipes (Elephant's foot yam).